The following is a 705-amino-acid chain: Phosphatidylinositol 4-phosphate 5-kinase 3 (705 aa).

7 MORN repeats span residues 58 to 80, 81 to 103, 104 to 126, 127 to 149, 150 to 172, 173 to 195, and 196 to 218; these read YNGG…DGCM, YEGE…SGAT, YEGQ…DGDT, YRGH…NGDG, YQGN…DGNE, YVGE…NGNR, and YDGL…EEKT. The region spanning 321-701 is the PIPK domain; it reads TVTAGHKNYD…RFRDFINKIF (381 aa). The activation loop stretch occupies residues 661–682; it reads YDITKKLEHAYKSLHADPASIS.

It is found in the cell membrane. The enzyme catalyses a 1,2-diacyl-sn-glycero-3-phospho-(1D-myo-inositol 4-phosphate) + ATP = a 1,2-diacyl-sn-glycero-3-phospho-(1D-myo-inositol-4,5-bisphosphate) + ADP + H(+). Functionally, with DRP1A and DRP2B, required for the precise coordination of polar ARAC3/ROP6 and ARAC4/ROP2 placement and subsequent root hair positioning during planar polarity formation in root hair-forming cells, probably by mediating the correct basal-to-planar polarity switching of D6PK into the polar, lipid-enriched domain. The protein is Phosphatidylinositol 4-phosphate 5-kinase 3 of Arabidopsis thaliana (Mouse-ear cress).